Consider the following 92-residue polypeptide: Long neurotoxin 469 (92 aa).

A signal peptide spans 1–21 (MKTLLLTLVVVTIVCLDLGDS). 5 disulfides stabilise this stretch: cysteine 24–cysteine 41, cysteine 34–cysteine 62, cysteine 47–cysteine 51, cysteine 66–cysteine 77, and cysteine 78–cysteine 83.

Belongs to the three-finger toxin family. Long-chain subfamily. Type II alpha-neurotoxin sub-subfamily. As to expression, expressed by the venom gland.

Its subcellular location is the secreted. Functionally, binds with high affinity to muscular (alpha-1/CHRNA1) and neuronal (alpha-7/CHRNA7) nicotinic acetylcholine receptor (nAChR) and inhibits acetylcholine from binding to the receptor, thereby impairing neuromuscular and neuronal transmission. In Drysdalia coronoides (White-lipped snake), this protein is Long neurotoxin 469.